Consider the following 967-residue polypeptide: MSSFHQNSSYMEDADYPGYSGSRNHTHNYLETQDYPEFPGSQNNPGFHHPRSNPHSSGSRTNPDYPYFQEEPDYPGSLSNTVYQDTRSHPFSAHSRTRPDYESSIEPDYNDFRSESYHAGLPMEPDYPGSQSHPGFAGVGRSSMNYTGPRTNLGYLGSLEEPDYPGAQDNSYYHSGSRPHSNLPGSRRDAGYAGSRINSYPDDLGEPDYPGAENQPNSPRFYGKPDYPGAEEGDGYSSSKSLAVIRRGNGPFGMLGRRNEDYPEGIGMVSMEMAGDPRNGYVNPAYTRRISPVCPDRNLLLCAHDWHTSVQGQKLIASLIPMTTRDRIKTIRNQPRTMQEKRELRKIVDKEKNKQSHGILEANCCAQCLGSLSLTYRRTRNGLSELLNYITLWQKRFKVIGGKFGTSVLSYFSFLRWLLKFNIFSFVMNFSFIIIPQFTVGAKNTLQFTGLEFFTGAGYFGDTVMYYGFYTNSTIRHRMGGASYNMQLAYIFTIGACLVVCFFSLLFSMAKYFRNNFINPHIYSRGIAKLIFCWDFTVTHEKAVKLKQKNLSTEIRENLSELRQENYRLTFNQQLTRFSAHVAAWLVSTGVTAACCVAVYYLAEYNSEFLKTHRNPGAVLLLPFVVSCINLAVPRFYSMFRLVERYEIPRQEVYVLLVRNIFLKISIVGILCYYWLNIVALSGEECWETLIGQDIYRLLLMDFVFSLADSLLGEFLRRLIGMKFTSLSLQEFDIARNVLELIYAQTLTWLGIFFCPLLPFIQMITLFIMFYVKNVSLMMNFQPPSKAWRASQMITFFIFLLFFPSFTGVLCTLAITIWRLKPSADCGPFRGLPSFIQSIYSWIDTLSRRPGYLWVVWIYQNLIGSVHFFFILTLIVLIITYLYWQITEGRKVMIRLLHEQIINEGKDKMFLIEKLTKLQDMEKRVNPSALDLERREVEPQIPLHLEELGAAPDLRLRRSAQEENPIA.

Polar residues-rich tracts occupy residues 1-10, 21-31, 53-62, and 168-184; these read MSSFHQNSSY, GSRNHTHNYLE, NPHSSGSRTN, and QDNSYYHSGSRPHSNLP. The interval 1–240 is disordered; that stretch reads MSSFHQNSSY…EEGDGYSSSK (240 aa). At 1-420 the chain is on the extracellular side; that stretch reads MSSFHQNSSY…YFSFLRWLLK (420 aa). Residues 421–441 form a helical membrane-spanning segment; sequence FNIFSFVMNFSFIIIPQFTVG. Topologically, residues 442–449 are cytoplasmic; that stretch reads AKNTLQFT. A helical transmembrane segment spans residues 450–470; it reads GLEFFTGAGYFGDTVMYYGFY. Over 471 to 487 the chain is Extracellular; that stretch reads TNSTIRHRMGGASYNMQ. The chain crosses the membrane as a helical span at residues 488-508; that stretch reads LAYIFTIGACLVVCFFSLLFS. Over 509–581 the chain is Cytoplasmic; the sequence is MAKYFRNNFI…NQQLTRFSAH (73 aa). The helical transmembrane segment at 582-602 threads the bilayer; it reads VAAWLVSTGVTAACCVAVYYL. Residues 603 to 616 are Extracellular-facing; that stretch reads AEYNSEFLKTHRNP. A helical membrane pass occupies residues 617 to 637; that stretch reads GAVLLLPFVVSCINLAVPRFY. Residues 638–660 lie on the Cytoplasmic side of the membrane; it reads SMFRLVERYEIPRQEVYVLLVRN. The chain crosses the membrane as a helical span at residues 661–681; that stretch reads IFLKISIVGILCYYWLNIVAL. Topologically, residues 682-694 are extracellular; it reads SGEECWETLIGQD. A helical membrane pass occupies residues 695 to 715; it reads IYRLLLMDFVFSLADSLLGEF. Topologically, residues 716 to 749 are cytoplasmic; sequence LRRLIGMKFTSLSLQEFDIARNVLELIYAQTLTW. Residues 750–770 traverse the membrane as a helical segment; it reads LGIFFCPLLPFIQMITLFIMF. The Extracellular portion of the chain corresponds to 771–796; sequence YVKNVSLMMNFQPPSKAWRASQMITF. A helical transmembrane segment spans residues 797 to 817; it reads FIFLLFFPSFTGVLCTLAITI. Residues 818 to 861 are Cytoplasmic-facing; sequence WRLKPSADCGPFRGLPSFIQSIYSWIDTLSRRPGYLWVVWIYQN. Residues 862-882 form a helical membrane-spanning segment; sequence LIGSVHFFFILTLIVLIITYL. At 883-967 the chain is on the extracellular side; the sequence is YWQITEGRKV…RSAQEENPIA (85 aa).

The protein belongs to the TMC family. In terms of tissue distribution, ubiquitously expressed.

The protein localises to the membrane. Probable component of an ion channel. Molecular function hasn't been characterized yet. This is Transmembrane channel-like protein 5 from Mus musculus (Mouse).